The primary structure comprises 341 residues: Cyclin-Y (341 aa).

Gly2 carries N-myristoyl glycine lipidation. A phosphoserine mark is found at Ser21 and Ser25. Phosphothreonine is present on Thr30. A Phosphoserine modification is found at Ser33. Thr37 is modified (phosphothreonine). Position 67 is a phosphothreonine; by CDK14 (Thr67). Phosphoserine; by CDK14 is present on residues Ser71 and Ser73. Position 75 is a phosphothreonine (Thr75). Position 83 is a phosphoserine; by CDK14 (Ser83). Ser99, Ser100, and Ser102 each carry phosphoserine. The region spanning 143-265 (DIFDENLHPL…FLELLQFNIN (123 aa)) is the Cyclin N-terminal domain. Ser280 carries the post-translational modification Phosphoserine. Residues Ser288 and Ser295 each carry the phosphoserine; by CDK14 modification. Phosphoserine is present on residues Ser324 and Ser326. Thr331 carries the phosphothreonine modification.

It belongs to the cyclin family. Cyclin Y subfamily. Found in a complex with CAPRIN2, LRP6 and CDK14 during G2/M stage; CAPRIN2 functions as a scaffold for the complex by binding to CCNY via its N terminus and to CDK14 via its C terminus. Interacts with CDK14. Interacts with CDK16. Interacts with LRP6. Post-translationally, ubiquitinated; leading to its degradation. Heavily phosphorylated. Phosphorylation at Ser-71 and Ser-73 by CDK14 is enhanced during the G2 and M cell cycle phases, and creates a phosphodegron triggering SCF-dependent ubiquitination. In terms of tissue distribution, widely expressed.

Its subcellular location is the cell membrane. It is found in the nucleus. Its function is as follows. Positive regulatory subunit of the cyclin-dependent kinases CDK14/PFTK1 and CDK16. Acts as a cell-cycle regulator of Wnt signaling pathway during G2/M phase by recruiting CDK14/PFTK1 to the plasma membrane and promoting phosphorylation of LRP6, leading to the activation of the Wnt signaling pathway. Recruits CDK16 to the plasma membrane. Isoform 3 might play a role in the activation of MYC-mediated transcription. In Homo sapiens (Human), this protein is Cyclin-Y (CCNY).